The following is a 137-amino-acid chain: Basic phospholipase A2 homolog bothropstoxin-I (137 aa).

The N-terminal stretch at 1–16 (MRTLWIMAVLLVGVEG) is a signal peptide. Disulfide bonds link Cys-42-Cys-131, Cys-44-Cys-60, Cys-59-Cys-111, Cys-65-Cys-137, Cys-66-Cys-104, Cys-73-Cys-97, and Cys-91-Cys-102. The important for membrane-damaging activities in eukaryotes and bacteria; heparin-binding stretch occupies residues 121 to 133 (KKYRYHLKPFCKK).

Belongs to the phospholipase A2 family. Group II subfamily. K49 sub-subfamily. As to quaternary structure, homodimer; non-covalently linked (probable alternative/compact dimer conformation in solution). Binds to heparin. Expressed by the venom gland.

It is found in the secreted. With respect to regulation, suramin inhibits both myotoxic and muscle-paralyzing activities. Chicoric acid inhibits myotoxic activity. Zinc ions inhibits the myotoxic activity and the neuromuscular blockade. Heparin inhibits myotoxic activity. Functionally, snake venom phospholipase A2 homolog that lacks enzymatic activity. Shows local myotoxic activity. Induces inflammation, since it induces edema and leukocytes infiltration. In addition, it induces NLRP3 NLRP3, ASC (PYCARD), caspase-1 (CASP1), and IL-1beta (IL1B) gene expression in the gastrocnemius muscle, showing that it is able to activate NLRP3 inflammasome. It also damages artificial and myoblast membranes by a calcium-independent mechanism, has bactericidal activity, and induces neuromuscular blockade. A model of myotoxic mechanism has been proposed: an apo Lys49-PLA2 is activated by the entrance of a hydrophobic molecule (e.g. fatty acid) at the hydrophobic channel of the protein leading to a reorientation of a monomer. This reorientation causes a transition between 'inactive' to 'active' states, causing alignment of C-terminal and membrane-docking sites (MDoS) side-by-side and putting the membrane-disruption sites (MDiS) in the same plane, exposed to solvent and in a symmetric position for both monomers. The MDoS region stabilizes the toxin on membrane by the interaction of charged residues with phospholipid head groups. Subsequently, the MDiS region destabilizes the membrane with penetration of hydrophobic residues. This insertion causes a disorganization of the membrane, allowing an uncontrolled influx of ions (i.e. calcium and sodium), and eventually triggering irreversible intracellular alterations and cell death. This is Basic phospholipase A2 homolog bothropstoxin-I from Bothrops jararacussu (Jararacussu).